The primary structure comprises 140 residues: uncharacterized protein (140 aa).

The next 2 membrane-spanning stretches (helical) occupy residues 26-43 (YLDL…TGVI) and 64-86 (LLNF…NGVL).

It belongs to the bacteriophage holin family. Cp-1 holin subfamily.

The protein localises to the cell membrane. This is an uncharacterized protein from Bacillus subtilis (strain 168).